Here is a 626-residue protein sequence, read N- to C-terminus: Glucoamylase (626 aa).

The first 19 residues, 1-19, serve as a signal peptide directing secretion; that stretch reads MHLVSSLLVVGAAFQAVLG. Residues 20-35 constitute a propeptide that is removed on maturation; that stretch reads LPDPLHEKRHSDIIKR. Residue N106 is glycosylated (N-linked (GlcNAc...) asparagine). Substrate is bound at residue W155. N206 carries N-linked (GlcNAc...) asparagine glycosylation. D211 (proton acceptor) is an active-site residue. Catalysis depends on E214, which acts as the Proton donor. Residue N217 is glycosylated (N-linked (GlcNAc...) asparagine). Residues 520 to 626 form the CBM20 domain; sequence CAADHEVLVT…STATLDDTWR (107 aa).

This sequence belongs to the glycosyl hydrolase 15 family.

It carries out the reaction Hydrolysis of terminal (1-&gt;4)-linked alpha-D-glucose residues successively from non-reducing ends of the chains with release of beta-D-glucose.. The sequence is that of Glucoamylase (gla-1) from Neurospora crassa (strain ATCC 24698 / 74-OR23-1A / CBS 708.71 / DSM 1257 / FGSC 987).